Consider the following 223-residue polypeptide: tRNA (guanine-N(7)-)-methyltransferase (223 aa).

Positions 56, 81, 108, and 130 each coordinate S-adenosyl-L-methionine. Asp-130 is an active-site residue. Substrate-binding residues include Lys-134 and Asp-166.

Belongs to the class I-like SAM-binding methyltransferase superfamily. TrmB family.

It catalyses the reaction guanosine(46) in tRNA + S-adenosyl-L-methionine = N(7)-methylguanosine(46) in tRNA + S-adenosyl-L-homocysteine. It functions in the pathway tRNA modification; N(7)-methylguanine-tRNA biosynthesis. Catalyzes the formation of N(7)-methylguanine at position 46 (m7G46) in tRNA. This chain is tRNA (guanine-N(7)-)-methyltransferase, found in Rubrobacter xylanophilus (strain DSM 9941 / JCM 11954 / NBRC 16129 / PRD-1).